A 705-amino-acid chain; its full sequence is Polyribonucleotide nucleotidyltransferase (705 aa).

Residues D487 and D493 each contribute to the Mg(2+) site. A KH domain is found at 554 to 613 (PKILTMSINPDKIRDVIGPSGKQINKIIEDTGVKIDIEQDGTIFISSTDESMNQKAKKII). The S1 motif domain maps to 623–691 (GQLYLGKVKR…KQGRVNLSRK (69 aa)).

This sequence belongs to the polyribonucleotide nucleotidyltransferase family. Mg(2+) is required as a cofactor.

The protein localises to the cytoplasm. It catalyses the reaction RNA(n+1) + phosphate = RNA(n) + a ribonucleoside 5'-diphosphate. Functionally, involved in mRNA degradation. Catalyzes the phosphorolysis of single-stranded polyribonucleotides processively in the 3'- to 5'-direction. This chain is Polyribonucleotide nucleotidyltransferase, found in Bacillus licheniformis (strain ATCC 14580 / DSM 13 / JCM 2505 / CCUG 7422 / NBRC 12200 / NCIMB 9375 / NCTC 10341 / NRRL NRS-1264 / Gibson 46).